A 908-amino-acid polypeptide reads, in one-letter code: Metabotropic glutamate receptor 8 (908 aa).

A signal peptide spans M1–S33. The Extracellular segment spans residues Q34 to W583. C64 and C106 are disulfide-bonded. The N-linked (GlcNAc...) asparagine glycan is linked to N95. L-glutamate contacts are provided by residues S156, A177–T179, and Y227. 7 disulfides stabilise this stretch: C246/C534, C369/C384, C424/C431, C516/C535, C520/C538, C541/C553, and C556/C569. N-linked (GlcNAc...) asparagine glycosylation occurs at N298. D309 provides a ligand contact to L-glutamate. L-glutamate is bound at residue K401. N-linked (GlcNAc...) asparagine glycosylation is found at N452 and N480. Residue N565 is glycosylated (N-linked (GlcNAc...) asparagine). The helical transmembrane segment at A584–Y608 threads the bilayer. Topologically, residues N609–E620 are cytoplasmic. The helical transmembrane segment at L621 to A641 threads the bilayer. The Extracellular portion of the chain corresponds to A642–I647. A helical transmembrane segment spans residues C648–T668. Residues K669–Q695 lie on the Cytoplasmic side of the membrane. The chain crosses the membrane as a helical span at residues L696–V716. Residues D717–D746 are Extracellular-facing. A helical membrane pass occupies residues L747 to I768. At K769–K781 the chain is on the cytoplasmic side. The helical transmembrane segment at P782–G803 threads the bilayer. Topologically, residues T804–L818 are extracellular. The chain crosses the membrane as a helical span at residues T819–F843. Topologically, residues H844 to I908 are cytoplasmic. K882 is covalently cross-linked (Glycyl lysine isopeptide (Lys-Gly) (interchain with G-Cter in SUMO1)).

It belongs to the G-protein coupled receptor 3 family. Interacts with PICK1.

Its subcellular location is the cell membrane. In terms of biological role, G-protein coupled receptor for glutamate. Ligand binding causes a conformation change that triggers signaling via guanine nucleotide-binding proteins (G proteins) and modulates the activity of down-stream effectors, such as adenylate cyclase. Signaling inhibits adenylate cyclase activity. In Homo sapiens (Human), this protein is Metabotropic glutamate receptor 8 (GRM8).